The chain runs to 99 residues: Duplicate procyclin (99 aa).

The polypeptide is Duplicate procyclin (Trypanosoma brucei brucei).